The sequence spans 905 residues: Alanine--tRNA ligase (905 aa).

Zn(2+) is bound by residues H569, H573, C693, and H697.

This sequence belongs to the class-II aminoacyl-tRNA synthetase family. It depends on Zn(2+) as a cofactor.

Its subcellular location is the cytoplasm. The enzyme catalyses tRNA(Ala) + L-alanine + ATP = L-alanyl-tRNA(Ala) + AMP + diphosphate. In terms of biological role, catalyzes the attachment of alanine to tRNA(Ala) in a two-step reaction: alanine is first activated by ATP to form Ala-AMP and then transferred to the acceptor end of tRNA(Ala). Also edits incorrectly charged Ser-tRNA(Ala) and Gly-tRNA(Ala) via its editing domain. The chain is Alanine--tRNA ligase from Roseiflexus castenholzii (strain DSM 13941 / HLO8).